Reading from the N-terminus, the 284-residue chain is Tropomyosin (284 aa).

Residues 1–47 are disordered; that stretch reads MDAIKKKMQAMKIEKDNAMDRADAAEEKARQQQERVEKLEEELRDTQ. The stretch at 1-284 forms a coiled coil; that stretch reads MDAIKKKMQA…DQTFQELSGY (284 aa). Basic and acidic residues predominate over residues 12–38; that stretch reads KIEKDNAMDRADAAEEKARQQQERVEK.

Belongs to the tropomyosin family. As to quaternary structure, homodimer.

In terms of biological role, tropomyosin, in association with the troponin complex, plays a central role in the calcium dependent regulation of muscle contraction. The protein is Tropomyosin of Trichinella pseudospiralis (Parasitic roundworm).